Reading from the N-terminus, the 378-residue chain is Erythronate-4-phosphate dehydrogenase (378 aa).

Positions 45 and 66 each coordinate substrate. NAD(+)-binding residues include D146 and T175. R208 is a catalytic residue. Residue D232 coordinates NAD(+). E237 is a catalytic residue. The active-site Proton donor is the H254. Residue G257 participates in NAD(+) binding. Y258 provides a ligand contact to substrate.

It belongs to the D-isomer specific 2-hydroxyacid dehydrogenase family. PdxB subfamily. In terms of assembly, homodimer.

The protein resides in the cytoplasm. The enzyme catalyses 4-phospho-D-erythronate + NAD(+) = (R)-3-hydroxy-2-oxo-4-phosphooxybutanoate + NADH + H(+). The protein operates within cofactor biosynthesis; pyridoxine 5'-phosphate biosynthesis; pyridoxine 5'-phosphate from D-erythrose 4-phosphate: step 2/5. Catalyzes the oxidation of erythronate-4-phosphate to 3-hydroxy-2-oxo-4-phosphonooxybutanoate. The chain is Erythronate-4-phosphate dehydrogenase from Escherichia coli O6:K15:H31 (strain 536 / UPEC).